We begin with the raw amino-acid sequence, 251 residues long: Triosephosphate isomerase (251 aa).

Position 9-11 (N9–K11) interacts with substrate. The active-site Electrophile is H96. The active-site Proton acceptor is E167. Substrate is bound by residues G173, S213, and G234–G235.

This sequence belongs to the triosephosphate isomerase family. Homodimer.

The protein localises to the cytoplasm. It catalyses the reaction D-glyceraldehyde 3-phosphate = dihydroxyacetone phosphate. It functions in the pathway carbohydrate biosynthesis; gluconeogenesis. The protein operates within carbohydrate degradation; glycolysis; D-glyceraldehyde 3-phosphate from glycerone phosphate: step 1/1. Functionally, involved in the gluconeogenesis. Catalyzes stereospecifically the conversion of dihydroxyacetone phosphate (DHAP) to D-glyceraldehyde-3-phosphate (G3P). The chain is Triosephosphate isomerase from Bacteroides fragilis (strain ATCC 25285 / DSM 2151 / CCUG 4856 / JCM 11019 / LMG 10263 / NCTC 9343 / Onslow / VPI 2553 / EN-2).